A 600-amino-acid polypeptide reads, in one-letter code: NADH-quinone oxidoreductase subunit C/D (600 aa).

The segment at 1-190 (MVNNMTDLTA…SPFELTKAKQ (190 aa)) is NADH dehydrogenase I subunit C. The segment at 214–600 (DFMFLNLGPN…IDFVMSDVDR (387 aa)) is NADH dehydrogenase I subunit D.

This sequence in the N-terminal section; belongs to the complex I 30 kDa subunit family. The protein in the C-terminal section; belongs to the complex I 49 kDa subunit family. As to quaternary structure, NDH-1 is composed of 13 different subunits. Subunits NuoB, CD, E, F, and G constitute the peripheral sector of the complex.

Its subcellular location is the cell inner membrane. It catalyses the reaction a quinone + NADH + 5 H(+)(in) = a quinol + NAD(+) + 4 H(+)(out). Its function is as follows. NDH-1 shuttles electrons from NADH, via FMN and iron-sulfur (Fe-S) centers, to quinones in the respiratory chain. The immediate electron acceptor for the enzyme in this species is believed to be ubiquinone. Couples the redox reaction to proton translocation (for every two electrons transferred, four hydrogen ions are translocated across the cytoplasmic membrane), and thus conserves the redox energy in a proton gradient. This Escherichia coli O127:H6 (strain E2348/69 / EPEC) protein is NADH-quinone oxidoreductase subunit C/D.